Consider the following 149-residue polypeptide: DnaJ homolog subfamily C member 24 (149 aa).

One can recognise a J domain in the interval aspartate 11 to arginine 82. The region spanning valine 93–tyrosine 148 is the DPH-type MB domain. The Zn(2+) site is built by cysteine 115, cysteine 117, cysteine 136, and cysteine 139.

It belongs to the DPH4 family. In terms of assembly, monomer and homooligomer. Iron binding promotes oligomerization.

It is found in the cytoplasm. The protein resides in the cytoskeleton. Its pathway is protein modification; peptidyl-diphthamide biosynthesis. In terms of biological role, stimulates the ATPase activity of several Hsp70-type chaperones. This ability is enhanced by iron-binding. The iron-bound form is redox-active and can function as electron carrier. Plays a role in the diphthamide biosynthesis, a post-translational modification of histidine which occurs in translation elongation factor 2 (EEF2) which can be ADP-ribosylated by diphtheria toxin and by Pseudomonas exotoxin A (Eta). This chain is DnaJ homolog subfamily C member 24, found in Homo sapiens (Human).